The sequence spans 557 residues: MRSDMIKKGFDKAPHRSLLKATGLKDEDFDKPFIAICNSFIEIIPGHKHLNEFGKLVKEAVRAAGMVPFEFNTIGVDDGIAMGHIGMRYSLPSREIIADSVETVVNAHWFDGMICIPNCDKITPGMMMAALRINIPTVFVSGGPMAAGKTSKGEVVDLSSVFEGVGAYQSGKISEEELKDIEDHGCPSCGSCSGMFTANSMNCLCEVLGLALPGNGSILAIDPRREELIKQAAEKLKILIERDIKPRDIVTEEAIDDAFALDMAMGGSTNTVLHTLALAHEAGLDYDMSRIDAVSRRVPHLCKVSPASNWHMEDIDRAGGISAILKEMSRKEGVLHLDRITATGQTLRENIAHAEIKDKEVIHSLENPHSEEGGLRILKGNLAKDGAVIKSGATEVKRFEGPCVIFNSQDEALAGIMLGKVKKGDVVVIRYEGPRGGPGMPEMLAPTSAIAGMGLGADVALLTDGRFSGASRGISVGHISPEAAAGGTIALLEQGDIVCIDVEERLLEVRISDEELDKRKKEWKRPEPKVKTGWLGRYAQMVTSANTGAVLKVPNFD.

D78 serves as a coordination point for Mg(2+). C119 serves as a coordination point for [2Fe-2S] cluster. Residues D120 and K121 each contribute to the Mg(2+) site. The residue at position 121 (K121) is an N6-carboxylysine. C192 lines the [2Fe-2S] cluster pocket. E442 contributes to the Mg(2+) binding site. S468 functions as the Proton acceptor in the catalytic mechanism.

This sequence belongs to the IlvD/Edd family. Homodimer. It depends on [2Fe-2S] cluster as a cofactor. Mg(2+) is required as a cofactor.

It catalyses the reaction (2R)-2,3-dihydroxy-3-methylbutanoate = 3-methyl-2-oxobutanoate + H2O. The catalysed reaction is (2R,3R)-2,3-dihydroxy-3-methylpentanoate = (S)-3-methyl-2-oxopentanoate + H2O. Its pathway is amino-acid biosynthesis; L-isoleucine biosynthesis; L-isoleucine from 2-oxobutanoate: step 3/4. It functions in the pathway amino-acid biosynthesis; L-valine biosynthesis; L-valine from pyruvate: step 3/4. Its function is as follows. Functions in the biosynthesis of branched-chain amino acids. Catalyzes the dehydration of (2R,3R)-2,3-dihydroxy-3-methylpentanoate (2,3-dihydroxy-3-methylvalerate) into 2-oxo-3-methylpentanoate (2-oxo-3-methylvalerate) and of (2R)-2,3-dihydroxy-3-methylbutanoate (2,3-dihydroxyisovalerate) into 2-oxo-3-methylbutanoate (2-oxoisovalerate), the penultimate precursor to L-isoleucine and L-valine, respectively. The polypeptide is Dihydroxy-acid dehydratase (Bacillus cereus (strain Q1)).